The following is a 139-amino-acid chain: MRIMGLDVGSKTVGVAISDPLGFTAQGLEIIQINEEQGQFGFDRVKELVDTYKVERFVVGLPKNMNNTSGPRVEASQAYGAKLEEFFGLPVDYQDERLTTVAAERMLIEQADISRNKRKKVIDKLAAQLILQNYLDRKF.

This sequence belongs to the YqgF nuclease family.

The protein localises to the cytoplasm. Its function is as follows. Could be a nuclease involved in processing of the 5'-end of pre-16S rRNA. The chain is Putative pre-16S rRNA nuclease from Streptococcus pneumoniae (strain JJA).